A 146-amino-acid chain; its full sequence is Putative inactive cytochrome P450 2G1 (146 aa).

Position 91 (cysteine 91) interacts with heme.

Belongs to the cytochrome P450 family. Requires heme as cofactor.

The chain is Putative inactive cytochrome P450 2G1 (CYP2G1P) from Homo sapiens (Human).